A 366-amino-acid polypeptide reads, in one-letter code: Class I histocompatibility antigen, Gogo-C*0201 alpha chain (366 aa).

Residues 1–24 form the signal peptide; that stretch reads MRVMAPRTLILPLSGALALTETWA. Positions 25 to 114 are alpha-1; sequence GSHSMRYFYT…LRGYYNQSED (90 aa). Residues 25–308 are Extracellular-facing; it reads GSHSMRYFYT…EPSSQPTIPI (284 aa). Asparagine 110 carries an N-linked (GlcNAc...) asparagine glycan. The segment at 115–206 is alpha-2; it reads GSHTLQSMYG…ENGKETLQRA (92 aa). 2 cysteine pairs are disulfide-bonded: cysteine 125-cysteine 188 and cysteine 227-cysteine 283. An alpha-3 region spans residues 207–298; the sequence is EPPKTHVTHH…GLPEPLTLRW (92 aa). Residues 209-297 form the Ig-like C1-type domain; sequence PKTHVTHHPL…EGLPEPLTLR (89 aa). Positions 299–308 are connecting peptide; the sequence is EPSSQPTIPI. The helical transmembrane segment at 309–333 threads the bilayer; sequence VGIVVGLAVLVVLAVLGAVVTAMMC. Topologically, residues 334–366 are cytoplasmic; that stretch reads RRKSSGGKGGSCSQAACSNSAQGSDESLITCKA.

It belongs to the MHC class I family. As to quaternary structure, heterodimer of an alpha chain and a beta chain (beta-2-microglobulin).

It is found in the membrane. Its function is as follows. Involved in the presentation of foreign antigens to the immune system. This chain is Class I histocompatibility antigen, Gogo-C*0201 alpha chain, found in Gorilla gorilla gorilla (Western lowland gorilla).